The primary structure comprises 119 residues: NADH-quinone oxidoreductase subunit A (119 aa).

A run of 3 helical transmembrane segments spans residues 9-29, 63-83, and 88-108; these read VILF…LGFL, LVAI…PWAV, and IGAT…VGFV.

This sequence belongs to the complex I subunit 3 family. NDH-1 is composed of 14 different subunits. Subunits NuoA, H, J, K, L, M, N constitute the membrane sector of the complex.

Its subcellular location is the cell inner membrane. It catalyses the reaction a quinone + NADH + 5 H(+)(in) = a quinol + NAD(+) + 4 H(+)(out). Functionally, NDH-1 shuttles electrons from NADH, via FMN and iron-sulfur (Fe-S) centers, to quinones in the respiratory chain. The immediate electron acceptor for the enzyme in this species is believed to be ubiquinone. Couples the redox reaction to proton translocation (for every two electrons transferred, four hydrogen ions are translocated across the cytoplasmic membrane), and thus conserves the redox energy in a proton gradient. The protein is NADH-quinone oxidoreductase subunit A of Leptothrix cholodnii (strain ATCC 51168 / LMG 8142 / SP-6) (Leptothrix discophora (strain SP-6)).